Reading from the N-terminus, the 308-residue chain is UDP-N-acetylenolpyruvoylglucosamine reductase (308 aa).

The FAD-binding PCMH-type domain occupies 33–197 (TGGNADFYLS…LEASFNLAPG (165 aa)). Arg-176 is a catalytic residue. The Proton donor role is filled by Ser-226. Residue Glu-296 is part of the active site.

This sequence belongs to the MurB family. FAD is required as a cofactor.

Its subcellular location is the cytoplasm. The enzyme catalyses UDP-N-acetyl-alpha-D-muramate + NADP(+) = UDP-N-acetyl-3-O-(1-carboxyvinyl)-alpha-D-glucosamine + NADPH + H(+). It participates in cell wall biogenesis; peptidoglycan biosynthesis. In terms of biological role, cell wall formation. This is UDP-N-acetylenolpyruvoylglucosamine reductase from Staphylococcus carnosus (strain TM300).